Consider the following 407-residue polypeptide: 1-deoxy-D-xylulose 5-phosphate reductoisomerase (407 aa).

Residues threonine 25, glycine 26, serine 27, isoleucine 28, asparagine 53, and asparagine 136 each coordinate NADPH. Lysine 137 serves as a coordination point for 1-deoxy-D-xylulose 5-phosphate. Glutamate 138 is a binding site for NADPH. Aspartate 162 is a binding site for Mn(2+). Residues serine 163, glutamate 164, serine 188, and histidine 211 each coordinate 1-deoxy-D-xylulose 5-phosphate. Glutamate 164 is a Mn(2+) binding site. Glycine 217 serves as a coordination point for NADPH. Serine 224, asparagine 229, lysine 230, and glutamate 233 together coordinate 1-deoxy-D-xylulose 5-phosphate. A Mn(2+)-binding site is contributed by glutamate 233.

This sequence belongs to the DXR family. It depends on Mg(2+) as a cofactor. Mn(2+) is required as a cofactor.

It catalyses the reaction 2-C-methyl-D-erythritol 4-phosphate + NADP(+) = 1-deoxy-D-xylulose 5-phosphate + NADPH + H(+). It participates in isoprenoid biosynthesis; isopentenyl diphosphate biosynthesis via DXP pathway; isopentenyl diphosphate from 1-deoxy-D-xylulose 5-phosphate: step 1/6. In terms of biological role, catalyzes the NADPH-dependent rearrangement and reduction of 1-deoxy-D-xylulose-5-phosphate (DXP) to 2-C-methyl-D-erythritol 4-phosphate (MEP). The protein is 1-deoxy-D-xylulose 5-phosphate reductoisomerase of Afipia carboxidovorans (strain ATCC 49405 / DSM 1227 / KCTC 32145 / OM5) (Oligotropha carboxidovorans).